The sequence spans 564 residues: Phenylalanine--tRNA ligase beta subunit (564 aa).

The B5 domain maps to 286–362 (YFQNTLEVSV…IGRGLDSFKP (77 aa)). Residues aspartate 340, aspartate 346, glutamate 349, and glutamate 350 each coordinate Mg(2+).

This sequence belongs to the phenylalanyl-tRNA synthetase beta subunit family. Type 2 subfamily. As to quaternary structure, tetramer of two alpha and two beta subunits. It depends on Mg(2+) as a cofactor.

It localises to the cytoplasm. The catalysed reaction is tRNA(Phe) + L-phenylalanine + ATP = L-phenylalanyl-tRNA(Phe) + AMP + diphosphate + H(+). The polypeptide is Phenylalanine--tRNA ligase beta subunit (Borrelia hermsii (strain HS1 / DAH)).